We begin with the raw amino-acid sequence, 119 residues long: Large ribosomal subunit protein bL19 (119 aa).

The protein belongs to the bacterial ribosomal protein bL19 family.

In terms of biological role, this protein is located at the 30S-50S ribosomal subunit interface and may play a role in the structure and function of the aminoacyl-tRNA binding site. In Pseudarthrobacter chlorophenolicus (strain ATCC 700700 / DSM 12829 / CIP 107037 / JCM 12360 / KCTC 9906 / NCIMB 13794 / A6) (Arthrobacter chlorophenolicus), this protein is Large ribosomal subunit protein bL19.